A 106-amino-acid polypeptide reads, in one-letter code: Large ribosomal subunit protein eL42 (106 aa).

Belongs to the eukaryotic ribosomal protein eL42 family.

It localises to the cytoplasm. This chain is Large ribosomal subunit protein eL42 (RPL44), found in Trypanosoma brucei brucei.